Consider the following 202-residue polypeptide: Ribonuclease HII (202 aa).

In terms of domain architecture, RNase H type-2 spans 12-201 (LLIAGVDEAG…VRQLKLFIPE (190 aa)). 3 residues coordinate a divalent metal cation: D18, E19, and D110.

It belongs to the RNase HII family. The cofactor is Mn(2+). Mg(2+) is required as a cofactor.

The protein localises to the cytoplasm. It catalyses the reaction Endonucleolytic cleavage to 5'-phosphomonoester.. In terms of biological role, endonuclease that specifically degrades the RNA of RNA-DNA hybrids. The chain is Ribonuclease HII from Coxiella burnetii (strain CbuK_Q154) (Coxiella burnetii (strain Q154)).